We begin with the raw amino-acid sequence, 216 residues long: Probable transaldolase (216 aa).

Catalysis depends on K83, which acts as the Schiff-base intermediate with substrate.

This sequence belongs to the transaldolase family. Type 3B subfamily.

It is found in the cytoplasm. It catalyses the reaction D-sedoheptulose 7-phosphate + D-glyceraldehyde 3-phosphate = D-erythrose 4-phosphate + beta-D-fructose 6-phosphate. Its pathway is carbohydrate degradation; pentose phosphate pathway; D-glyceraldehyde 3-phosphate and beta-D-fructose 6-phosphate from D-ribose 5-phosphate and D-xylulose 5-phosphate (non-oxidative stage): step 2/3. Its function is as follows. Transaldolase is important for the balance of metabolites in the pentose-phosphate pathway. The polypeptide is Probable transaldolase (Methanococcus aeolicus (strain ATCC BAA-1280 / DSM 17508 / OCM 812 / Nankai-3)).